We begin with the raw amino-acid sequence, 1624 residues long: Pappalysin-1 (1624 aa).

The signal sequence occupies residues 1–22; the sequence is MRLWSWVLRLGLLSAALGCGLA. Positions 23–81 are excised as a propeptide; it reads ERPRRVRRDPRAVRPPRPAAGPATCATRAARGRRASPPPPPGGAWEAVRVPRRRQQRAA. The interval 28–93 is disordered; sequence VRRDPRAVRP…AEEPSPPSRA (66 aa). The span at 42–51 shows a compositional bias: low complexity; the sequence is AGPATCATRA. 17 disulfides stabilise this stretch: Cys-141-Cys-232, Cys-324-Cys-619, Cys-329-Cys-654, Cys-411-Cys-425, Cys-421-Cys-437, Cys-454-Cys-470, Cys-471-Cys-482, Cys-580-Cys-597, Cys-584-Cys-609, Cys-707-Cys-875, Cys-710-Cys-878, Cys-750-Cys-832, Cys-772-Cys-778, Cys-944-Cys-972, Cys-957-Cys-968, Cys-980-Cys-987, and Cys-996-Cys-1008. Positions 272 to 583 are metalloprotease; that stretch reads RGLHTPLPQL…ISEIQSCSDP (312 aa). 2 N-linked (GlcNAc...) asparagine glycosylation sites follow: Asn-387 and Asn-398. Asn-426 is a glycosylation site (N-linked (GlcNAc...) asparagine). Residue Asn-516 is glycosylated (N-linked (GlcNAc...) asparagine). Position 559 (His-559) interacts with Zn(2+). The active site involves Glu-560. Zn(2+) is bound by residues His-563 and His-569. N-linked (GlcNAc...) asparagine glycans are attached at residues Asn-598, Asn-616, and Asn-722. Asn-822 is a glycosylation site (N-linked (GlcNAc...) asparagine). Asn-1023 is a glycosylation site (N-linked (GlcNAc...) asparagine). Disulfide bonds link Cys-1033–Cys-1067, Cys-1048–Cys-1136, Cys-1189–Cys-1202, Cys-1212–Cys-1266, Cys-1224–Cys-1235, Cys-1239–Cys-1277, Cys-1282–Cys-1326, Cys-1297–Cys-1307, Cys-1311–Cys-1339, Cys-1343–Cys-1396, Cys-1359–Cys-1370, Cys-1374–Cys-1407, Cys-1412–Cys-1455, Cys-1425–Cys-1435, Cys-1439–Cys-1468, Cys-1475–Cys-1536, Cys-1489–Cys-1499, Cys-1503–Cys-1551, and Cys-1555–Cys-1573. 5 consecutive Sushi domains span residues 1210–1279, 1280–1341, 1342–1409, 1410–1470, and 1473–1553; these read ADCP…ACEP, VDCG…LCEL, MCLA…TCVP, VTCD…VCRE, and GQCS…HCVK. 2 N-linked (GlcNAc...) asparagine glycosylation sites follow: Asn-1219 and Asn-1223. A glycan (N-linked (GlcNAc...) asparagine) is linked at Asn-1320. Asn-1516 carries an N-linked (GlcNAc...) asparagine glycan.

The protein belongs to the peptidase M43B family. Homodimer; disulfide-linked. In pregnancy serum, predominantly found as a disulfide-linked 2:2 heterotetramer with the proform of PRG2. Zn(2+) is required as a cofactor. In terms of tissue distribution, detected in kidney, spleen, brain, ovary, breast, skin, prostate, uterus, and placenta.

The protein localises to the secreted. The enzyme catalyses Cleavage of the 135-Met-|-Lys-136 bond in insulin-like growth factor binding protein (IGFBP)-4, and the 143-Ser-|-Lys-144 bond in IGFBP-5.. Metalloproteinase which specifically cleaves IGFBP-4 and IGFBP-5, resulting in release of bound IGF. Cleavage of IGFBP-4 is dramatically enhanced by the presence of IGF, whereas cleavage of IGFBP-5 is slightly inhibited by the presence of IGF. Isoform 2 cleaves IGFBP-4 very slowly compared to PAPP-A, but its ability to cleave IGFBP-5 is unaffected. This chain is Pappalysin-1 (Pappa), found in Mus musculus (Mouse).